A 95-amino-acid polypeptide reads, in one-letter code: Protein TusB (95 aa).

The protein belongs to the DsrH/TusB family. As to quaternary structure, heterohexamer, formed by a dimer of trimers. The hexameric TusBCD complex contains 2 copies each of TusB, TusC and TusD. The TusBCD complex interacts with TusE.

It is found in the cytoplasm. Its function is as follows. Part of a sulfur-relay system required for 2-thiolation of 5-methylaminomethyl-2-thiouridine (mnm(5)s(2)U) at tRNA wobble positions. This chain is Protein TusB, found in Photorhabdus laumondii subsp. laumondii (strain DSM 15139 / CIP 105565 / TT01) (Photorhabdus luminescens subsp. laumondii).